The chain runs to 156 residues: Peptidyl-prolyl cis-trans isomerase H (156 aa).

One can recognise a PPIase cyclophilin-type domain in the interval 1 to 155; the sequence is TPAGRLKCEL…MAVRITQCGE (155 aa).

This sequence belongs to the cyclophilin-type PPIase family. PPIase H subfamily.

The protein localises to the nucleus. The catalysed reaction is [protein]-peptidylproline (omega=180) = [protein]-peptidylproline (omega=0). In terms of biological role, PPIases accelerate the folding of proteins. It catalyzes the cis-trans isomerization of proline imidic peptide bonds in oligopeptides. This Mycosarcoma maydis (Corn smut fungus) protein is Peptidyl-prolyl cis-trans isomerase H (CYP3).